A 211-amino-acid polypeptide reads, in one-letter code: Pupal cuticle protein G1A (211 aa).

A run of 5 repeats spans residues 13–16 (AAPA), 21–24 (AAPA), 33–36 (AAPV), 111–114 (AAPV), and 179–182 (AAPV).

Its function is as follows. Component of the cuticle of the pupa of Tenebrio molitor. The protein is Pupal cuticle protein G1A of Tenebrio molitor (Yellow mealworm beetle).